Reading from the N-terminus, the 401-residue chain is MSNYNLPDDNGHFDKYGGIFIAETLMTAVFELKDAYARFKNDSKFICEFEQDLKHYAGRETPLYYAKNLSKKLRGAQIYLKREDLNHTGSHKINNTIGQALLAKRMGKTRIIAETGAGQHGVATATVAARLGLECVVYMGEVDVARQSLNVFRMKLLGAKVIPVTSGSKTLKDSLNEAMRDWVKNIDDTFYIIGTIAGPHPYPMMVRDFQSIIGKEAKAQFHDQVGGLPDALVACVGGGSNAIGLFYAFIDNVSVEIYGVEAAGHGLEKGPSAHAAPLCAGNVGVLHGNRTYLMGDENGQIIEGHSIAAGLDYPGVGPEHAYLKDSGRAQYMAITDKEALEAFHILTKIEGILPALESSHAVAYGIKLAKKLGKNKSIIINLSGRGDKDIHTIAQIEGIEC.

The residue at position 92 (lysine 92) is an N6-(pyridoxal phosphate)lysine.

It belongs to the TrpB family. Tetramer of two alpha and two beta chains. The cofactor is pyridoxal 5'-phosphate.

The catalysed reaction is (1S,2R)-1-C-(indol-3-yl)glycerol 3-phosphate + L-serine = D-glyceraldehyde 3-phosphate + L-tryptophan + H2O. It functions in the pathway amino-acid biosynthesis; L-tryptophan biosynthesis; L-tryptophan from chorismate: step 5/5. The beta subunit is responsible for the synthesis of L-tryptophan from indole and L-serine. The chain is Tryptophan synthase beta chain from Vesicomyosocius okutanii subsp. Calyptogena okutanii (strain HA).